The following is a 305-amino-acid chain: 4-diphosphocytidyl-2-C-methyl-D-erythritol kinase (305 aa).

Lysine 17 is a catalytic residue. An ATP-binding site is contributed by 111–121; sequence PVASGIGGGSA. Aspartate 154 is a catalytic residue.

This sequence belongs to the GHMP kinase family. IspE subfamily.

It carries out the reaction 4-CDP-2-C-methyl-D-erythritol + ATP = 4-CDP-2-C-methyl-D-erythritol 2-phosphate + ADP + H(+). Its pathway is isoprenoid biosynthesis; isopentenyl diphosphate biosynthesis via DXP pathway; isopentenyl diphosphate from 1-deoxy-D-xylulose 5-phosphate: step 3/6. Catalyzes the phosphorylation of the position 2 hydroxy group of 4-diphosphocytidyl-2C-methyl-D-erythritol. In Gluconacetobacter diazotrophicus (strain ATCC 49037 / DSM 5601 / CCUG 37298 / CIP 103539 / LMG 7603 / PAl5), this protein is 4-diphosphocytidyl-2-C-methyl-D-erythritol kinase.